The following is a 331-amino-acid chain: MRFRFGVVVPPAGAGAAPELLVVGSRPELGRWEPRGAVRLRPAGSAAGGGARALQEPGLWLGEVELAPGEAARDGAEPARVDTFWYKFLKREPGGALSWEGNGPHHDRCCTYNENNLVDGVYCLPIGHWIEATGHTNEMKHTTDFYFNIAGHQAMHYSRILPNIWLGSCPRQVEHITIKLKHELGITAVMNFQTEWDIVQNSSGCNRYPEPMTPDTMIKLYKEEGLVYIWMPTPDMSTEGRVQMLPQAVCLLHALLENGHTVYVHCNAGVGRSTAAVCGWLQYVMGWNLRKVQYFLMAKRPAVYIDEDALARAEEDFFQKFGKVRSSVCSV.

Residues 1 to 124 (MRFRFGVVVP…NNLVDGVYCL (124 aa)) form the CBM20 domain. The residue at position 25 (Ser-25) is a Phosphoserine; by AMPK. Substrate contacts are provided by residues Trp-32, Lys-87, 103 to 107 (GPHHD), Asp-197, Asp-235, and Arg-241. The 168-residue stretch at 156 to 323 (HYSRILPNIW…EEDFFQKFGK (168 aa)) folds into the Tyrosine-protein phosphatase domain. Cys-266 acts as the Phosphocysteine intermediate in catalysis. Positions 266–272 (CNAGVGR) match the Glucan phosphatase signature motif CXAGXGR motif. Substrate-binding positions include 267–272 (NAGVGR) and Tyr-304.

It belongs to the protein-tyrosine phosphatase family. As to quaternary structure, homodimer. Interacts with itself. Interacts with PPP1R3B, PPP1R3C, PPP1R3D, HIRIP5, and EPM2AIP1. Binds glycogen and Lafora bodies. Interacts with NHLRC1/malin (via the NHL repeats). Forms a complex with NHLRC1/malin and HSP70. Interacts with PPP1R3D; in the presence of NHLC1/malin the interaction leads to ubiquitination and autophagic degradation of PPP1R3D. Interacts (via the phosphatase domain) with MAPT/Tau; the interaction dephosphorylates MAPT. Interacts with PRDM8. Post-translationally, polyubiquitinated by NHLRC1/malin. Phosphorylation on Ser-25 by AMPK affects the phosphatase activity of the enzyme and its ability to homodimerize and interact with NHLRC1, PPP1R3C or PRKAA2.

The protein localises to the cytoplasm. The protein resides in the endoplasmic reticulum membrane. It localises to the cell membrane. It carries out the reaction O-phospho-L-tyrosyl-[protein] + H2O = L-tyrosyl-[protein] + phosphate. It catalyses the reaction O-phospho-L-seryl-[protein] + H2O = L-seryl-[protein] + phosphate. The enzyme catalyses O-phospho-L-threonyl-[protein] + H2O = L-threonyl-[protein] + phosphate. Plays an important role in preventing glycogen hyperphosphorylation and the formation of insoluble aggregates, via its activity as glycogen phosphatase, and by promoting the ubiquitination of proteins involved in glycogen metabolism via its interaction with the E3 ubiquitin ligase NHLRC1/malin. Dephosphorylates phosphotyrosine and synthetic substrates, such as para-nitrophenylphosphate (pNPP), and has low activity with phosphoserine and phosphothreonine substrates (in vitro). Has also been shown to dephosphorylate MAPT. Shows strong phosphatase activity towards complex carbohydrates in vitro, avoiding glycogen hyperphosphorylation which is associated with reduced branching and formation of insoluble aggregates. Forms a complex with NHLRC1/malin and HSP70, which suppresses the cellular toxicity of misfolded proteins by promoting their degradation through the ubiquitin-proteasome system (UPS). Acts as a scaffold protein to facilitate PPP1R3C/PTG ubiquitination by NHLRC1/malin. Also promotes proteasome-independent protein degradation through the macroautophagy pathway. The chain is Laforin (EPM2A) from Canis lupus familiaris (Dog).